The chain runs to 209 residues: Ephrin-A2 (209 aa).

Residues 1-20 (MAPAQRPLLPLLLLLLPLRA) form the signal peptide. In terms of domain architecture, Ephrin RBD spans 30–170 (ADRYAVYWNR…RLKVYVRPTN (141 aa)). A glycan (N-linked (GlcNAc...) asparagine) is linked at asparagine 38. 2 disulfides stabilise this stretch: cysteine 69-cysteine 110 and cysteine 98-cysteine 159. Asparagine 170 and asparagine 184 each carry an N-linked (GlcNAc...) asparagine glycan. Residue asparagine 184 is the site of GPI-anchor amidated asparagine attachment. A propeptide spans 185–209 (SSCSGLGGCHLFLTTVPVLWSLLGS) (removed in mature form).

Belongs to the ephrin family. In terms of assembly, binds to the receptor tyrosine kinases EPHA3, EPHA4 and EPHA5. Interacts with EPHA8; activates EPHA8. Expressed in myogenic progenitor cells.

The protein resides in the cell membrane. Its function is as follows. Cell surface GPI-bound ligand for Eph receptors, a family of receptor tyrosine kinases which are crucial for migration, repulsion and adhesion during neuronal, vascular and epithelial development. Binds promiscuously Eph receptors residing on adjacent cells, leading to contact-dependent bidirectional signaling into neighboring cells. The signaling pathway downstream of the receptor is referred to as forward signaling while the signaling pathway downstream of the ephrin ligand is referred to as reverse signaling. With the EPHA2 receptor may play a role in bone remodeling through regulation of osteoclastogenesis and osteoblastogenesis. The protein is Ephrin-A2 (Efna2) of Mus musculus (Mouse).